Reading from the N-terminus, the 661-residue chain is MVEHVPFKLKSEFEPQGDQPQAIQKIVDGVNEGKRHQTLLGATGTGKTFTMSNVIKEVGKPTLIIAHNKTLAGQLYSEFKEFFPENRVEYFVSYYDYYQPEAYVPSTDTFIEKDASINDEIDQLRHSATSSLFERDDVIIIASVSCIYGLGNPEEYKNLVVSVRVGMEMERSELLRKLVDVQYSRNDIDFQRGTFRVRGDVVEIFPASREEMCIRVEFFGDEIDRIREVNYLTGEVIREREHFTIFPASHFVTREEKMKVAIERIEKELEERLKELRDENKLLEAQRLEQRTNYDLEMMREMGFCSGIENYSVHLTLRPLGSTPYTLLDYFGDDWLVMIDESHVTLPQIRGMYNGDRARKQVLIDHGFRLPSALDNRPLKFEEFEEKTKQLVYVSATPGPYELEHTDEMVEQIIRPTGLLDPKIDVRPTENQIDDLLSEIQDRVDKDERVLVTTLTKKMSEDLTTYMKEAGIKVNYLHSEIKTLERIEIIRDLRMGTYDAIVGINLLREGIDIPEVSLVVILDADKEGFLRSDRSLIQTIGRAARNDKGEVIMYADKITDSMQYAIDETQRRREIQIAHNKEHGITPKTINKKIHDVISATVESDETNQQQQTELPKKMTKKERQKTIENIEKEMKKAAKDLDFEKATELRDMLFELKAEG.

A Helicase ATP-binding domain is found at 28-414 (DGVNEGKRHQ…HTDEMVEQII (387 aa)). 41-48 (GATGTGKT) provides a ligand contact to ATP. The Beta-hairpin signature appears at 94 to 117 (YYDYYQPEAYVPSTDTFIEKDASI). In terms of domain architecture, Helicase C-terminal spans 432–598 (QIDDLLSEIQ…TINKKIHDVI (167 aa)). Positions 603-624 (ESDETNQQQQTELPKKMTKKER) are disordered. A UVR domain is found at 625–660 (QKTIENIEKEMKKAAKDLDFEKATELRDMLFELKAE).

Belongs to the UvrB family. In terms of assembly, forms a heterotetramer with UvrA during the search for lesions. Interacts with UvrC in an incision complex.

It is found in the cytoplasm. In terms of biological role, the UvrABC repair system catalyzes the recognition and processing of DNA lesions. A damage recognition complex composed of 2 UvrA and 2 UvrB subunits scans DNA for abnormalities. Upon binding of the UvrA(2)B(2) complex to a putative damaged site, the DNA wraps around one UvrB monomer. DNA wrap is dependent on ATP binding by UvrB and probably causes local melting of the DNA helix, facilitating insertion of UvrB beta-hairpin between the DNA strands. Then UvrB probes one DNA strand for the presence of a lesion. If a lesion is found the UvrA subunits dissociate and the UvrB-DNA preincision complex is formed. This complex is subsequently bound by UvrC and the second UvrB is released. If no lesion is found, the DNA wraps around the other UvrB subunit that will check the other stand for damage. In Staphylococcus epidermidis (strain ATCC 35984 / DSM 28319 / BCRC 17069 / CCUG 31568 / BM 3577 / RP62A), this protein is UvrABC system protein B.